The sequence spans 334 residues: Glucan endo-1,3-beta-glucosidase GII (334 aa).

The first 28 residues, 1 to 28 (MARKDVASMFAAALFIGAFAAVPTSVQS), serve as a signal peptide directing secretion. The Proton donor role is filled by glutamate 122. The Nucleophile role is filled by glutamate 259.

This sequence belongs to the glycosyl hydrolase 17 family.

The enzyme catalyses Hydrolysis of (1-&gt;3)-beta-D-glucosidic linkages in (1-&gt;3)-beta-D-glucans.. In terms of biological role, may provide a degree of protection against microbial invasion of germinated barley grain through its ability to degrade fungal cell wall polysaccharides. Hydrolyzes laminarin in vitro. This chain is Glucan endo-1,3-beta-glucosidase GII, found in Hordeum vulgare (Barley).